A 62-amino-acid chain; its full sequence is Small ribosomal subunit protein bS21 (62 aa).

The span at 40 to 52 (KPSVKRKLKSEAA) shows a compositional bias: basic and acidic residues. A disordered region spans residues 40 to 62 (KPSVKRKLKSEAARKRKNKRRRY). Residues 53–62 (RKRKNKRRRY) are compositionally biased toward basic residues.

Belongs to the bacterial ribosomal protein bS21 family.

The sequence is that of Small ribosomal subunit protein bS21 from Limosilactobacillus fermentum (strain NBRC 3956 / LMG 18251) (Lactobacillus fermentum).